Reading from the N-terminus, the 126-residue chain is Small ribosomal subunit protein uS13c (126 aa).

Residues 100 to 126 (GQRTRTNARTRRGARQTVAGKKKAPSK) form a disordered region. Positions 101 to 126 (QRTRTNARTRRGARQTVAGKKKAPSK) are enriched in basic residues.

It belongs to the universal ribosomal protein uS13 family. As to quaternary structure, part of the 30S ribosomal subunit.

Its subcellular location is the plastid. The protein localises to the cyanelle. Functionally, located at the top of the head of the 30S subunit, it contacts several helices of the 16S rRNA. In Cyanophora paradoxa, this protein is Small ribosomal subunit protein uS13c.